The following is a 157-amino-acid chain: Dihydrofolate reductase type 6 (157 aa).

The DHFR domain maps to 2–156 (KISLMAAVSE…IDYTYQIWAK (155 aa)).

The protein belongs to the dihydrofolate reductase family. As to quaternary structure, homodimer.

The catalysed reaction is (6S)-5,6,7,8-tetrahydrofolate + NADP(+) = 7,8-dihydrofolate + NADPH + H(+). Its pathway is cofactor biosynthesis; tetrahydrofolate biosynthesis; 5,6,7,8-tetrahydrofolate from 7,8-dihydrofolate: step 1/1. Functionally, key enzyme in folate metabolism. Catalyzes an essential reaction for de novo glycine and purine synthesis, and for DNA precursor synthesis. The protein is Dihydrofolate reductase type 6 (dhfrVI) of Proteus mirabilis.